The primary structure comprises 222 residues: Ribose-5-phosphate isomerase A (222 aa).

Substrate contacts are provided by residues 29–32 (TGST), 82–85 (DSAD), and 95–98 (KGGG). The active-site Proton acceptor is the glutamate 104. Lysine 122 serves as a coordination point for substrate.

The protein belongs to the ribose 5-phosphate isomerase family. Homodimer.

It carries out the reaction aldehydo-D-ribose 5-phosphate = D-ribulose 5-phosphate. It participates in carbohydrate degradation; pentose phosphate pathway; D-ribose 5-phosphate from D-ribulose 5-phosphate (non-oxidative stage): step 1/1. In terms of biological role, catalyzes the reversible conversion of ribose-5-phosphate to ribulose 5-phosphate. The sequence is that of Ribose-5-phosphate isomerase A from Blochmanniella floridana.